The primary structure comprises 227 residues: Cytochrome c oxidase subunit 2 (227 aa).

Topologically, residues Met-1–Ser-14 are mitochondrial intermembrane. Residues Pro-15–Met-45 traverse the membrane as a helical segment. Residues Leu-46–Gln-59 are Mitochondrial matrix-facing. A helical transmembrane segment spans residues Glu-60 to Met-87. Residues Asp-88–Val-227 lie on the Mitochondrial intermembrane side of the membrane. Positions 161, 196, 198, 200, 204, and 207 each coordinate Cu cation. Glu-198 lines the Mg(2+) pocket. Tyr-218 is modified (phosphotyrosine).

Belongs to the cytochrome c oxidase subunit 2 family. Component of the cytochrome c oxidase (complex IV, CIV), a multisubunit enzyme composed of 14 subunits. The complex is composed of a catalytic core of 3 subunits MT-CO1, MT-CO2 and MT-CO3, encoded in the mitochondrial DNA, and 11 supernumerary subunits COX4I, COX5A, COX5B, COX6A, COX6B, COX6C, COX7A, COX7B, COX7C, COX8 and NDUFA4, which are encoded in the nuclear genome. The complex exists as a monomer or a dimer and forms supercomplexes (SCs) in the inner mitochondrial membrane with NADH-ubiquinone oxidoreductase (complex I, CI) and ubiquinol-cytochrome c oxidoreductase (cytochrome b-c1 complex, complex III, CIII), resulting in different assemblies (supercomplex SCI(1)III(2)IV(1) and megacomplex MCI(2)III(2)IV(2)). Found in a complex with TMEM177, COA6, COX18, COX20, SCO1 and SCO2. Interacts with TMEM177 in a COX20-dependent manner. Interacts with COX20. Interacts with COX16. Cu cation serves as cofactor.

The protein localises to the mitochondrion inner membrane. It catalyses the reaction 4 Fe(II)-[cytochrome c] + O2 + 8 H(+)(in) = 4 Fe(III)-[cytochrome c] + 2 H2O + 4 H(+)(out). Its function is as follows. Component of the cytochrome c oxidase, the last enzyme in the mitochondrial electron transport chain which drives oxidative phosphorylation. The respiratory chain contains 3 multisubunit complexes succinate dehydrogenase (complex II, CII), ubiquinol-cytochrome c oxidoreductase (cytochrome b-c1 complex, complex III, CIII) and cytochrome c oxidase (complex IV, CIV), that cooperate to transfer electrons derived from NADH and succinate to molecular oxygen, creating an electrochemical gradient over the inner membrane that drives transmembrane transport and the ATP synthase. Cytochrome c oxidase is the component of the respiratory chain that catalyzes the reduction of oxygen to water. Electrons originating from reduced cytochrome c in the intermembrane space (IMS) are transferred via the dinuclear copper A center (CU(A)) of subunit 2 and heme A of subunit 1 to the active site in subunit 1, a binuclear center (BNC) formed by heme A3 and copper B (CU(B)). The BNC reduces molecular oxygen to 2 water molecules using 4 electrons from cytochrome c in the IMS and 4 protons from the mitochondrial matrix. The polypeptide is Cytochrome c oxidase subunit 2 (MT-CO2) (Canis mesomelas elongae (Eastern African black-backed jackal)).